Here is a 256-residue protein sequence, read N- to C-terminus: MFGNTTISKMLLDYGARIDSRNKEECLPLNHAIATNNKELTSLFLARGADTNIVDKYNRSVLHKAIGNNNITSVKLLLNHGIDYNLRDNHGYTALHYAITLQNREITDMLLSSGADPNIMNNEKHTPLYHALLYRSSNVESLILHGADINIVDDTGKTPLSNTYIDIIDNKNIEVIVSQFTILEYIAPDDIKNQLGYKINTDLINNNKRYSTIKQKCVHEINLLKAIKFHSGYSAEIFLIKSKSNIFHNSQGIQIL.

ANK repeat units follow at residues 1 to 20, 24 to 53, 57 to 86, 90 to 119, and 123 to 151; these read MFGN…RIDS, EECL…DTNI, YNRS…DYNL, HGYT…DPNI, and EKHT…DINI.

This Vertebrata (FPV) protein is Putative ankyrin repeat protein FPV231.